Reading from the N-terminus, the 132-residue chain is Methylglyoxal synthase (132 aa).

The 132-residue stretch at 1–132 (MNIALIAHDQ…LLEWREIEDK (132 aa)) folds into the MGS-like domain. 2 residues coordinate substrate: His-8 and Lys-12. Residue Asp-60 is the Proton donor/acceptor of the active site. Substrate is bound at residue His-87.

Belongs to the methylglyoxal synthase family.

It catalyses the reaction dihydroxyacetone phosphate = methylglyoxal + phosphate. In terms of biological role, catalyzes the formation of methylglyoxal from dihydroxyacetone phosphate. In Thermoanaerobacter pseudethanolicus (strain ATCC 33223 / 39E) (Clostridium thermohydrosulfuricum), this protein is Methylglyoxal synthase.